A 319-amino-acid polypeptide reads, in one-letter code: Quinolinate synthase (319 aa).

Iminosuccinate contacts are provided by H35 and S52. A [4Fe-4S] cluster-binding site is contributed by C97. Iminosuccinate contacts are provided by residues 123-125 (YIN) and S140. Position 183 (C183) interacts with [4Fe-4S] cluster. Iminosuccinate contacts are provided by residues 209 to 211 (HPE) and T226. C276 contacts [4Fe-4S] cluster.

It belongs to the quinolinate synthase family. Type 2 subfamily. It depends on [4Fe-4S] cluster as a cofactor.

The protein resides in the cytoplasm. The enzyme catalyses iminosuccinate + dihydroxyacetone phosphate = quinolinate + phosphate + 2 H2O + H(+). Its pathway is cofactor biosynthesis; NAD(+) biosynthesis; quinolinate from iminoaspartate: step 1/1. Functionally, catalyzes the condensation of iminoaspartate with dihydroxyacetone phosphate to form quinolinate. This is Quinolinate synthase from Microcystis aeruginosa (strain NIES-843 / IAM M-2473).